The sequence spans 433 residues: Glutamate-1-semialdehyde 2,1-aminomutase (433 aa).

Lys271 bears the N6-(pyridoxal phosphate)lysine mark.

This sequence belongs to the class-III pyridoxal-phosphate-dependent aminotransferase family. HemL subfamily. In terms of assembly, homodimer. Pyridoxal 5'-phosphate is required as a cofactor.

It localises to the cytoplasm. It catalyses the reaction (S)-4-amino-5-oxopentanoate = 5-aminolevulinate. It functions in the pathway porphyrin-containing compound metabolism; protoporphyrin-IX biosynthesis; 5-aminolevulinate from L-glutamyl-tRNA(Glu): step 2/2. Its pathway is porphyrin-containing compound metabolism; chlorophyll biosynthesis. The protein is Glutamate-1-semialdehyde 2,1-aminomutase of Prochlorococcus marinus (strain SARG / CCMP1375 / SS120).